The primary structure comprises 167 residues: NADH-quinone oxidoreductase subunit I 1 (167 aa).

2 consecutive 4Fe-4S ferredoxin-type domains span residues 58–88 (LRRYPNGEERCIACKLCEAVCPAQAITIDAE) and 98–127 (TRYDIDMTKCIYCGFCQEACPVDAIVEGPN). Positions 68, 71, 74, 78, 107, 110, 113, and 117 each coordinate [4Fe-4S] cluster.

Belongs to the complex I 23 kDa subunit family. In terms of assembly, NDH-1 is composed of 14 different subunits. Subunits NuoA, H, J, K, L, M, N constitute the membrane sector of the complex. [4Fe-4S] cluster serves as cofactor.

It localises to the cell inner membrane. It carries out the reaction a quinone + NADH + 5 H(+)(in) = a quinol + NAD(+) + 4 H(+)(out). In terms of biological role, NDH-1 shuttles electrons from NADH, via FMN and iron-sulfur (Fe-S) centers, to quinones in the respiratory chain. The immediate electron acceptor for the enzyme in this species is believed to be ubiquinone. Couples the redox reaction to proton translocation (for every two electrons transferred, four hydrogen ions are translocated across the cytoplasmic membrane), and thus conserves the redox energy in a proton gradient. The sequence is that of NADH-quinone oxidoreductase subunit I 1 from Cereibacter sphaeroides (strain ATCC 17029 / ATH 2.4.9) (Rhodobacter sphaeroides).